The sequence spans 131 residues: Small ribosomal subunit protein uS9 (131 aa).

The protein belongs to the universal ribosomal protein uS9 family.

The protein is Small ribosomal subunit protein uS9 of Actinobacillus pleuropneumoniae serotype 5b (strain L20).